A 265-amino-acid chain; its full sequence is Lipopolysaccharide core heptose(I) kinase WaaP (265 aa).

Asp-162 is a catalytic residue.

This sequence belongs to the protein kinase superfamily. KdkA/RfaP family. It depends on Mg(2+) as a cofactor.

The catalysed reaction is an L-alpha-D-Hep-(1-&gt;3)-L-alpha-D-Hep-(1-&gt;5)-[alpha-Kdo-(2-&gt;4)]-alpha-Kdo-(2-&gt;6)-lipid A + ATP = an L-alpha-D-Hep-(1-&gt;3)-4-O-phospho-L-alpha-D-Hep-(1-&gt;5)-[alpha-Kdo-(2-&gt;4)]-alpha-Kdo-(2-&gt;6)-lipid A + ADP + H(+). It catalyses the reaction L-alpha-D-Hep-(1-&gt;3)-L-alpha-D-Hep-(1-&gt;5)-[alpha-Kdo-(2-&gt;4)]-alpha-Kdo-(2-&gt;6)-lipid A (E. coli) + ATP = L-alpha-D-Hep-(1-&gt;3)-4-O-phospho-L-alpha-D-Hep-(1-&gt;5)-[alpha-Kdo-(2-&gt;4)]-alpha-Kdo-(2-&gt;6)-lipid A (E. coli) + ADP + H(+). Its pathway is bacterial outer membrane biogenesis; LPS core biosynthesis. Functionally, kinase involved in the biosynthesis of the core oligosaccharide region of lipopolysaccharide (LPS). Catalyzes the phosphorylation of heptose I (HepI), the first heptose added to the Kdo2-lipid A module. The sequence is that of Lipopolysaccharide core heptose(I) kinase WaaP from Escherichia coli (strain K12).